The chain runs to 382 residues: G-box-binding factor 3 (382 aa).

Positions 1–16 are enriched in basic and acidic residues; that stretch reads MGNSSEEPKPPTKSDK. 3 disordered regions span residues 1–26, 97–221, and 257–285; these read MGNSSEEPKPPTKSDKPSSPPVDQTN, MGSL…GVKL, and ERELKRERRKQSNRESARRSRLRKQAETE. The span at 111 to 130 shows a compositional bias: polar residues; the sequence is TPGTLLSIDTPTKSTGNTDN. A compositionally biased stretch (basic and acidic residues) spans 155 to 165; that stretch reads ADEHKRSRNSS. The segment covering 166-181 has biased composition (low complexity); it reads ETDGSTDGSDGNTTGA. The span at 182–199 shows a compositional bias: basic and acidic residues; the sequence is DEPKLKRSREGTPTKDGK. Residues 202–216 show a composition bias toward polar residues; sequence VQASSFHSVSPSSGD. The 64-residue stretch at 259 to 322 folds into the bZIP domain; sequence ELKRERRKQS…DKLRGANATL (64 aa). Residues 261–280 are basic motif; it reads KRERRKQSNRESARRSRLRK. Residues 287–322 form a leucine-zipper region; the sequence is LARKVEALTAENMALRSELNQLNEKSDKLRGANATL. Residues 329-382 are disordered; the sequence is SEPEKRVPANMLSRVKNSGAGDKNKNQGDNDSNSTSKLHQLLDTKPRAKAVAAG. A compositionally biased stretch (polar residues) spans 357–366; it reads DNDSNSTSKL.

Belongs to the bZIP family. DNA-binding heterodimer. Interacts with GBF4. Interacts with BZIP16 and BZIP68. Present only in dark grown leaves and roots.

Its subcellular location is the nucleus. In terms of biological role, binds to the G-box motif (5'-CCACGTGG-3') of the rbcS-1A gene promoter. G-box and G-box-like motifs are cis-acting elements defined in promoters of certain plant genes which are regulated by such diverse stimuli as light-induction or hormone control. This chain is G-box-binding factor 3 (GBF3), found in Arabidopsis thaliana (Mouse-ear cress).